A 243-amino-acid polypeptide reads, in one-letter code: Phosphoribosyl isomerase A (243 aa).

The Proton acceptor role is filled by aspartate 10. Catalysis depends on aspartate 129, which acts as the Proton donor.

Belongs to the HisA/HisF family.

It localises to the cytoplasm. The enzyme catalyses 1-(5-phospho-beta-D-ribosyl)-5-[(5-phospho-beta-D-ribosylamino)methylideneamino]imidazole-4-carboxamide = 5-[(5-phospho-1-deoxy-D-ribulos-1-ylimino)methylamino]-1-(5-phospho-beta-D-ribosyl)imidazole-4-carboxamide. It carries out the reaction N-(5-phospho-beta-D-ribosyl)anthranilate = 1-(2-carboxyphenylamino)-1-deoxy-D-ribulose 5-phosphate. It participates in amino-acid biosynthesis; L-histidine biosynthesis; L-histidine from 5-phospho-alpha-D-ribose 1-diphosphate: step 4/9. The protein operates within amino-acid biosynthesis; L-tryptophan biosynthesis; L-tryptophan from chorismate: step 3/5. In terms of biological role, involved in both the histidine and tryptophan biosynthetic pathways. This is Phosphoribosyl isomerase A from Mycobacteroides abscessus (strain ATCC 19977 / DSM 44196 / CCUG 20993 / CIP 104536 / JCM 13569 / NCTC 13031 / TMC 1543 / L948) (Mycobacterium abscessus).